Reading from the N-terminus, the 413-residue chain is Probable Xaa-Pro aminopeptidase UREG_07123 (413 aa).

Mn(2+) is bound by residues D194, D205, E340, and E379.

The protein belongs to the peptidase M24B family. Mn(2+) serves as cofactor.

It carries out the reaction Release of any N-terminal amino acid, including proline, that is linked to proline, even from a dipeptide or tripeptide.. Functionally, catalyzes the removal of a penultimate prolyl residue from the N-termini of peptides. The polypeptide is Probable Xaa-Pro aminopeptidase UREG_07123 (Uncinocarpus reesii (strain UAMH 1704)).